We begin with the raw amino-acid sequence, 437 residues long: Transcription factor AP-2-alpha (437 aa).

K10 participates in a covalent cross-link: Glycyl lysine isopeptide (Lys-Gly) (interchain with G-Cter in SUMO); alternate. Residue K10 forms a Glycyl lysine isopeptide (Lys-Gly) (interchain with G-Cter in SUMO2); alternate linkage. The segment at 14 to 107 is disordered; that stretch reads CEDRHDGTSN…GQRQSQESGL (94 aa). The short motif at 57 to 62 is the PPxY motif element; that stretch reads YFPPPY. Low complexity-rich tracts occupy residues 65–74 and 88–101; these read IYPQSQDPYS and QPQPQHPGWPGQRQ. Glycyl lysine isopeptide (Lys-Gly) (interchain with G-Cter in SUMO2) cross-links involve residues K177 and K184. At S239 the chain carries Phosphoserine; by PKA. Residues 280–410 are H-S-H (helix-span-helix), dimerization; sequence RRKAANVTLL…YLTEALKAMD (131 aa). Residues 414–427 are compositionally biased toward polar residues; it reads LSNNPNSHTDNSAK. Residues 414–437 form a disordered region; it reads LSNNPNSHTDNSAKSSDKEEKHRK. Positions 428-437 are enriched in basic and acidic residues; sequence SSDKEEKHRK.

It belongs to the AP-2 family. As to quaternary structure, binds DNA as a dimer. Can form homodimers or heterodimers with other AP-2 family members. Interacts with WWOX. Interacts with UBE2I. Interacts with RALBP1 in a complex also containing EPN1 and NUMB during interphase and mitosis. Interacts with CITED4. Interacts with KCTD1; this interaction represses transcription activation. Interacts (via C-terminus) with CITED2 (via C-terminus); the interaction stimulates TFAP2A-transcriptional activation. Interacts (via N-terminus) with EP300 (via N-terminus); the interaction requires CITED2. Interacts with KCTD15; this interaction inhibits TFAP2A transcriptional activation. In terms of processing, sumoylated on Lys-10; which inhibits transcriptional activity.

The protein resides in the nucleus. Functionally, sequence-specific DNA-binding protein that interacts with inducible viral and cellular enhancer elements to regulate transcription of selected genes. AP-2 factors bind to the consensus sequence 5'-GCCNNNGGC-3' and activate genes involved in a large spectrum of important biological functions including proper eye, face, body wall, limb and neural tube development. They also suppress a number of genes including MCAM/MUC18, C/EBP alpha and MYC. AP-2-alpha is the only AP-2 protein required for early morphogenesis of the lens vesicle. Together with the CITED2 coactivator, stimulates the PITX2 P1 promoter transcription activation. Associates with chromatin to the PITX2 P1 promoter region. The chain is Transcription factor AP-2-alpha (Tfap2a) from Mus musculus (Mouse).